The chain runs to 88 residues: Putative membrane protein insertion efficiency factor (88 aa).

This sequence belongs to the UPF0161 family.

The protein resides in the cell inner membrane. Could be involved in insertion of integral membrane proteins into the membrane. The polypeptide is Putative membrane protein insertion efficiency factor (Koribacter versatilis (strain Ellin345)).